The following is an 897-amino-acid chain: Cytokine receptor common subunit beta (897 aa).

Residues 1–16 (MVLAQGLLSMALLALC) form the signal peptide. The Extracellular portion of the chain corresponds to 17-443 (WERSLAGAEE…WDTESVLPMW (427 aa)). An intrachain disulfide couples C35 to C45. N-linked (GlcNAc...) asparagine glycosylation is present at N58. Disulfide bonds link C75–C96 and C86–C91. Residues 133 to 240 (PPEPRDLQIS…PEVCWDSQPG (108 aa)) enclose the Fibronectin type-III 1 domain. N191 is a glycosylation site (N-linked (GlcNAc...) asparagine). 2 disulfide bridges follow: C250–C260 and C289–C306. Residues 339–436 (QMAPPSLNVT…EWSEARSWDT (98 aa)) form the Fibronectin type-III 2 domain. N-linked (GlcNAc...) asparagine glycosylation occurs at N346. A WSXWS motif motif is present at residues 425–429 (WSEWS). The helical transmembrane segment at 444 to 460 (VLALIVIFLTIAVLLAL) threads the bilayer. The Cytoplasmic segment spans residues 461 to 897 (RFCGIYGYRL…WEVNKPGEVC (437 aa)). The short motif at 474-482 (WEEKIPNPS) is the Box 1 motif element. 4 disordered regions span residues 498–517 (GSMSAFTSGSPPHQGPWGSR), 532–630 (SEVS…EYLC), 648–812 (PGQA…QPEG), and 830–849 (PGPLSLRSKPSSPGPGPEIK). Over residues 564-574 (EQPPSPQPGPP) the composition is skewed to pro residues. The span at 723–752 (SGASSVSLVPSLGLPSDQTPSLCPGLASGP) shows a compositional bias: low complexity. Y766 bears the Phosphotyrosine mark. The segment covering 830-840 (PGPLSLRSKPS) has biased composition (low complexity).

The protein belongs to the type I cytokine receptor family. Type 4 subfamily. As to quaternary structure, heterodimer of an alpha and a beta subunit. The beta subunit is common to the IL3, IL5 and GM-CSF receptors. The signaling GM-CSF receptor complex is a dodecamer of two head-to-head hexamers of two alpha, two beta, and two ligand subunits. Interacts with TMEM102; this interaction occurs preferentially in the absence of CSF2. Interacts with FCER1G; this interaction is direct. Interacts with LYN. Interacts with JAK1. Post-translationally, may be phosphorylated by LYN.

The protein localises to the membrane. Its function is as follows. Cell surface receptor that plays a role in immune response and controls the production and differentiation of hematopoietic progenitor cells into lineage-restricted cells. Acts by forming an heterodimeric receptor through interaction with different partners such as IL3RA, IL5RA or CSF2RA. In turn, participates in various signaling pathways including interleukin-3, interleukin-5 and granulocyte-macrophage colony-stimulating factor/CSF2 pathways. In unstimulated conditions, interacts constitutively with JAK1 and ligand binding leads to JAK1 stimulation and subsequent activation of the JAK-STAT pathway. The sequence is that of Cytokine receptor common subunit beta (CSF2RB) from Homo sapiens (Human).